A 74-amino-acid chain; its full sequence is Conotoxin TsMLCL-04 (74 aa).

Positions 1–19 (MLCLPVFIILLLLASPAAP) are cleaved as a signal peptide. A propeptide spanning residues 20 to 60 (NPLETRIQRDLIRAALEDADMKTNERFLEGVISTIKDFAGK) is cleaved from the precursor.

It belongs to the conotoxin T superfamily. Post-translationally, contains 2 disulfide bonds that can be either 'C1-C3, C2-C4' or 'C1-C4, C2-C3', since these disulfide connectivities have been observed for conotoxins with cysteine framework V (for examples, see AC P0DQQ7 and AC P81755). Expressed by the venom duct.

The protein localises to the secreted. The protein is Conotoxin TsMLCL-04 of Conus tessulatus (Tessellate cone).